An 883-amino-acid polypeptide reads, in one-letter code: Probable ribonuclease ZC3H12C (883 aa).

Disordered regions lie at residues 53–109 (QLSP…ISVE) and 139–158 (DFKPEESQTTSKEAKKPPDV). Serine 230 is subject to Phosphoserine. The RNase NYN domain maps to 245 to 400 (LRPIVIDGSN…LGRHGPSLDN (156 aa)). The C3H1-type zinc-finger motif lies at 410–435 (EHKKQPCPYGKKCTYGHKCKYYHPER). Disordered stretches follow at residues 456 to 551 (AKTA…FPPQ), 680 to 738 (FHDP…KAPH), and 754 to 775 (SRLYDSSPSRQRKPYSRQEGLG). Residues 466–477 (KSNSVPCSTKAD) show a composition bias toward polar residues. The segment covering 503–515 (LEEKLPTKNKLET) has biased composition (basic and acidic residues). Residues 517-542 (SVPSLVSIPATSTAKPQSTTSLSNGL) are compositionally biased toward polar residues. Low complexity predominate over residues 705 to 714 (HLALHLPHSA).

The protein belongs to the ZC3H12 family. Mg(2+) serves as cofactor.

Its function is as follows. May function as RNase and regulate the levels of target RNA species. In Homo sapiens (Human), this protein is Probable ribonuclease ZC3H12C (ZC3H12C).